A 402-amino-acid polypeptide reads, in one-letter code: Phosphoglycerate kinase (402 aa).

Substrate-binding positions include 21–23, R36, 59–62, R118, and R151; these read DFN and HLGR. ATP contacts are provided by residues K201, G293, E324, and 353–356; that span reads GGDS.

It belongs to the phosphoglycerate kinase family. As to quaternary structure, monomer.

Its subcellular location is the cytoplasm. It catalyses the reaction (2R)-3-phosphoglycerate + ATP = (2R)-3-phospho-glyceroyl phosphate + ADP. It participates in carbohydrate degradation; glycolysis; pyruvate from D-glyceraldehyde 3-phosphate: step 2/5. The polypeptide is Phosphoglycerate kinase (Thermosipho africanus (strain TCF52B)).